A 270-amino-acid polypeptide reads, in one-letter code: tRNA pseudouridine synthase A (270 aa).

The active-site Nucleophile is the Asp52. Tyr110 is a binding site for substrate.

Belongs to the tRNA pseudouridine synthase TruA family. As to quaternary structure, homodimer.

The enzyme catalyses uridine(38/39/40) in tRNA = pseudouridine(38/39/40) in tRNA. Functionally, formation of pseudouridine at positions 38, 39 and 40 in the anticodon stem and loop of transfer RNAs. The chain is tRNA pseudouridine synthase A from Paraburkholderia phytofirmans (strain DSM 17436 / LMG 22146 / PsJN) (Burkholderia phytofirmans).